The sequence spans 233 residues: 7-cyano-7-deazaguanine synthase (233 aa).

7–17 (LSGGLDSAVTS) lines the ATP pocket. The Zn(2+) site is built by Cys-195, Cys-206, Cys-209, and Cys-212.

Belongs to the QueC family. It depends on Zn(2+) as a cofactor.

The catalysed reaction is 7-carboxy-7-deazaguanine + NH4(+) + ATP = 7-cyano-7-deazaguanine + ADP + phosphate + H2O + H(+). It participates in purine metabolism; 7-cyano-7-deazaguanine biosynthesis. In terms of biological role, catalyzes the ATP-dependent conversion of 7-carboxy-7-deazaguanine (CDG) to 7-cyano-7-deazaguanine (preQ(0)). This chain is 7-cyano-7-deazaguanine synthase, found in Methanococcus maripaludis (strain C5 / ATCC BAA-1333).